The sequence spans 663 residues: Protein pat-12 (663 aa).

Polar residues predominate over residues Met-1–Ser-15. 4 disordered regions span residues Met-1–Tyr-78, Arg-367–Thr-430, Phe-517–Arg-546, and Pro-597–Arg-663. The span at Arg-367 to Arg-380 shows a compositional bias: basic and acidic residues. The span at Val-381–His-400 shows a compositional bias: basic residues. A compositionally biased stretch (polar residues) spans Phe-517 to Ser-526. 2 stretches are compositionally biased toward basic and acidic residues: residues Phe-620–Asp-640 and Asn-649–Arg-663.

In terms of assembly, interacts with vab-10 (via plankin domain). In terms of tissue distribution, isoform a: Expressed in the uterus, the vulva, the rectum, mechanosensory neurons and in head and tail neurons. Isoform e: Expressed in spermatheca and weakly in the vulva. Isoform f: Expressed in spermatheca and weakly in the vulva. Isoform i: Expressed in spermatheca and weakly in the vulva.

It localises to the apical cell membrane. The protein localises to the basal cell membrane. It is found in the cytoplasm. The protein resides in the cell junction. Its subcellular location is the hemidesmosome. It localises to the cell membrane. The protein localises to the cytoskeleton. Functionally, required for embryonic morphology and development. Plays both a functional and a structural role in the maintenance and probably biogenesis of fibrous organelles, a hemidesomosome-like junction structure, which ensures muscle stability and muscle connection to the external cuticle. This is Protein pat-12 from Caenorhabditis elegans.